The primary structure comprises 329 residues: Transcription factor RAX1 (329 aa).

HTH myb-type domains are found at residues 9 to 62 (KTKV…LNYL) and 63 to 117 (RPNI…RKKL). DNA-binding regions (H-T-H motif) lie at residues 38-62 (WISF…LNYL) and 90-113 (WSII…NTKL). 2 stretches are compositionally biased toward low complexity: residues 122-131 (SDSSSSAMAS) and 144-154 (PTSPTTIPSSS). The segment at 122–162 (SDSSSSAMASPYLNPISQDVKRPTSPTTIPSSSYNPYAENP) is disordered.

Mostly expressed in roots. Also present in shoot tips and flower buds.

The protein resides in the nucleus. In terms of biological role, transcription activator of genes involved in the regulation of meristematic competence, such as CUC2. Positively regulates axillary meristems (AMs) formation and development, especially at early phases of vegetative growth, probably by specifying a stem cell niche for AM formation. Modulates the negative regulation mediated by gibberellic acid on the timing of developmental phase transitions. The polypeptide is Transcription factor RAX1 (RAX1) (Arabidopsis thaliana (Mouse-ear cress)).